A 153-amino-acid polypeptide reads, in one-letter code: Small ribosomal subunit protein uS13 (153 aa).

The protein belongs to the universal ribosomal protein uS13 family. As to quaternary structure, part of the 30S ribosomal subunit. Forms a loose heterodimer with protein S19. Forms two bridges to the 50S subunit in the 70S ribosome.

Located at the top of the head of the 30S subunit, it contacts several helices of the 16S rRNA. In the 70S ribosome it contacts the 23S rRNA (bridge B1a) and protein L5 of the 50S subunit (bridge B1b), connecting the 2 subunits; these bridges are implicated in subunit movement. The protein is Small ribosomal subunit protein uS13 of Pyrobaculum islandicum (strain DSM 4184 / JCM 9189 / GEO3).